Here is a 176-residue protein sequence, read N- to C-terminus: Disulfide bond formation protein B (176 aa).

The Cytoplasmic segment spans residues 1–14 (MLRFLNQCSQGRGA). A helical transmembrane segment spans residues 15–31 (WLLMAFTALALELTALW). Residues 32-49 (FQHVMLLKPCVLCIYERC) lie on the Periplasmic side of the membrane. The cysteines at positions 41 and 44 are disulfide-linked. A helical transmembrane segment spans residues 50 to 65 (ALFGVLGAALIGAIAP). Residues 66–71 (KTPLRY) lie on the Cytoplasmic side of the membrane. A helical membrane pass occupies residues 72 to 89 (VAMVIWLYSAFRGVQLTY). The Periplasmic portion of the chain corresponds to 90–144 (EHTMLQLYPSPFATCDFMVRFPEWLPLDKWVPQVFVASGDCAERQWDFLGMEMPQ). Cys-104 and Cys-130 are oxidised to a cystine. A helical membrane pass occupies residues 145–163 (WLLGIFIAYLIVAVLVVIS). Topologically, residues 164 to 176 (QPFKAKKRDLFGR) are cytoplasmic.

Belongs to the DsbB family.

It is found in the cell inner membrane. Required for disulfide bond formation in some periplasmic proteins such as PhoA or OmpA. Acts by oxidizing the DsbA protein. This Shigella flexneri protein is Disulfide bond formation protein B.